The following is a 463-amino-acid chain: L-seryl-tRNA(Sec) selenium transferase (463 aa).

N6-(pyridoxal phosphate)lysine is present on Lys295.

The protein belongs to the SelA family. As to quaternary structure, homodecamer; pentamer of dimers. Binds only one seryl-tRNA(Sec) per dimer. Pyridoxal 5'-phosphate serves as cofactor.

It is found in the cytoplasm. The enzyme catalyses L-seryl-tRNA(Sec) + selenophosphate + H(+) = L-selenocysteinyl-tRNA(Sec) + phosphate. Its pathway is aminoacyl-tRNA biosynthesis; selenocysteinyl-tRNA(Sec) biosynthesis; selenocysteinyl-tRNA(Sec) from L-seryl-tRNA(Sec) (bacterial route): step 1/1. Its function is as follows. Converts seryl-tRNA(Sec) to selenocysteinyl-tRNA(Sec) required for selenoprotein biosynthesis. This Escherichia coli (strain K12 / MC4100 / BW2952) protein is L-seryl-tRNA(Sec) selenium transferase.